The following is a 395-amino-acid chain: Extracellular cysteine protease (395 aa).

An N-terminal signal peptide occupies residues 1–30 (MKKKLSYMITIMLAFTLSLALGLFFNSAHA). A propeptide spanning residues 31-221 (DSLPQKNGAN…TLEYQSTRNE (191 aa)) is cleaved from the precursor. Active-site residues include cysteine 245, histidine 341, and asparagine 362.

Belongs to the peptidase C47 family. In terms of processing, proteolytically cleaved.

The protein resides in the secreted. It is found in the cell wall. Its function is as follows. Cysteine protease able to cleave elastin, insulin, myoglobin, fibronectin, fibrinogen, HMW-kininogen, alpha-1-protease inhibitor and alpha-1-antitrypsin. Along with other extracellular proteases may contribute to the colonization and infection of human tissues. The sequence is that of Extracellular cysteine protease (ecpA) from Staphylococcus epidermidis (strain ATCC 35984 / DSM 28319 / BCRC 17069 / CCUG 31568 / BM 3577 / RP62A).